The chain runs to 654 residues: Fatty acid photodecarboxylase, chloroplastic (654 aa).

Residues 1–62 (MASITSRASA…RRGGALSARA (62 aa)) constitute a chloroplast transit peptide. Residues 93 to 94 (TA), glutamate 114, leucine 162, serine 166, 170 to 173 (NATL), and valine 298 contribute to the FAD site. Residues cysteine 432, arginine 451, tyrosine 466, and glutamine 486 each contribute to the hexadecanoate site. Glycine 622 contributes to the FAD binding site.

Belongs to the GMC oxidoreductase family. FAD is required as a cofactor.

Its subcellular location is the plastid. The protein localises to the chloroplast. The catalysed reaction is a long-chain fatty acid + hnu + H(+) = a long-chain alkane + CO2. The enzyme catalyses hnu + hexadecanoate + H(+) = pentadecane + CO2. It catalyses the reaction hnu + octadecanoate + H(+) = heptadecane + CO2. It carries out the reaction heptadecanoate + hnu + H(+) = hexadecane + CO2. The catalysed reaction is hnu + tetradecanoate + H(+) = tridecane + CO2. The enzyme catalyses octanoate + hnu + H(+) = heptane + CO2. Its activity is regulated as follows. Activated by blue light and repressed by red light. Catalyzes the decarboxylation of free fatty acids to n-alkanes or n-alkenes in response to blue light. Substrate preference is toward fatty acids with C16 or C17 chains. Converts n-octanoic acid (C8 chain) more efficiently than palmitate (n-hexadecanoic acid, C16 chain) into n-heptane (C7 chain) and n-pentadecane (C15 chain), respectively, partly due to an autocatalytic effect of its n-heptane product. Saturated fatty acids are converted to alkanes, not alkenes. The decarboxylation is initiated through electron abstraction from the fatty acid by the photo-excited FAD. This chain is Fatty acid photodecarboxylase, chloroplastic, found in Chlorella variabilis (Green alga).